The sequence spans 155 residues: Ribonuclease H (155 aa).

The RNase H type-1 domain occupies 1-142; it reads MLKQVEIFTD…CDELARAAAM (142 aa). Positions 10, 48, 70, and 134 each coordinate Mg(2+).

Belongs to the RNase H family. In terms of assembly, monomer. It depends on Mg(2+) as a cofactor.

The protein resides in the cytoplasm. It catalyses the reaction Endonucleolytic cleavage to 5'-phosphomonoester.. Endonuclease that specifically degrades the RNA of RNA-DNA hybrids. This is Ribonuclease H from Escherichia coli (strain 55989 / EAEC).